The chain runs to 476 residues: MTRPPAPPPGAPGADELLDCGLLSPVRAGTPVEALVCDSAWLQAMLDAEAALTRAQARTGFLPAAAAEAITAAARADRIDLLAVARGARETANPVVGLVAALTAAVRRDDPAAAEYVHRGSTSQDVLDTGAMLVARRALRLIGDDLDRAADALAALAADHRDTPMAGRTLALHAVPTTFGLKAAGWLELVSEAAGRVARLRDGLPFSLGGAAGTLAGYFGDRTDRGDPAVLLDRLLDAYAAETGLARPVLPWHVLRTPVADLAAVLAFTAGALGKIAVDVQSLARTEVAEVAEPAVEGRGASSAMPHKRNPVLSTLIRSAALQVPALATGLTQCLVSEDERSAGAWHAEWQPLRECLRLTGGAARTAVELAAGLEVDAARMRANLDLTDGRIVSESVAVALTPLLGRQAAKELLTRAAFTAGHEGRTLGEVLGELPELDGVLPKERWEALLDPARATGVAGALVDGALARRRPPAR.

Arg-137, Arg-140, and Arg-201 together coordinate fumarate. Ser-302 (proton acceptor) is an active-site residue. Residues Lys-308 and Asn-310 each contribute to the fumarate site. Residue Arg-341 is the Proton donor of the active site.

Belongs to the class-II fumarase/aspartase family. Homotetramer.

The enzyme catalyses 2-nitrobutanedioate = fumarate + nitrite + H(+). The protein operates within antibiotic biosynthesis. Part of a gene cluster involved in the biosynthesis of cremeomycin, a light-sensitive o-diazoquinone with antibacterial and antiproliferative effects. Catalyzes the formation of nitrous acid from nitrosuccinic acid (2-nitrobutanedioate) by elimination of its nitro group. The sequence is that of Nitrosuccinate lyase from Streptomyces cremeus.